The chain runs to 359 residues: Cytohesin-interacting protein (359 aa).

Residues 77 to 166 (LVTVEKQDNE…LLTIETLNGT (90 aa)) form the PDZ domain. The interaction with CYTH1 stretch occupies residues 166-188 (TMILKRTELEAKLQVLKQTLKQK). Residues 166–188 (TMILKRTELEAKLQVLKQTLKQK) adopt a coiled-coil conformation.

As to quaternary structure, interacts with CYTH1 and SNX27. Expressed in lymph nodes, thymus, spleen, lung, peripheral blood leukocytes and bone marrow.

The protein localises to the cytoplasm. The protein resides in the early endosome. Functionally, by its binding to cytohesin-1 (CYTH1), it modifies activation of ARFs by CYTH1 and its precise function may be to sequester CYTH1 in the cytoplasm. This is Cytohesin-interacting protein (CYTIP) from Homo sapiens (Human).